The sequence spans 265 residues: Upstream stimulatory factor (265 aa).

Residues 1–18 (MDVQDHTLDQGPQDKDKD) are compositionally biased toward basic and acidic residues. Disordered regions lie at residues 1–21 (MDVQ…DLEE) and 119–149 (ASAA…AAGG). Positions 134-144 (GEQQPGITQPS) are enriched in polar residues. The bHLH domain maps to 190–245 (RRRATHNEVERRRRDKINNWIVKLSKIIPDCNIDHSKQGQSKGGILTKTCDYIHDL).

Efficient DNA binding requires dimerization with another bHLH protein. Binds DNA as a homodimer or a heterodimer. As to expression, enriched in ectodermal tissue.

It is found in the nucleus. May act as a transcription factor which recognizes the CACGTG motif on SPEC gene promoters. The polypeptide is Upstream stimulatory factor (Strongylocentrotus purpuratus (Purple sea urchin)).